Consider the following 319-residue polypeptide: D-alanine--D-alanine ligase (319 aa).

The 196-residue stretch at 120-315 folds into the ATP-grasp domain; the sequence is KRVLAQAGVP…YPELLRRLVE (196 aa). ATP is bound at residue 147 to 198; that stretch reads DPPFFVKPANTGSSVGISRVERFQDLEAALALAFRYDEKAVVEKALSPVREL. D270, E282, and N284 together coordinate Mg(2+).

The protein belongs to the D-alanine--D-alanine ligase family. Mg(2+) serves as cofactor. Requires Mn(2+) as cofactor.

The protein localises to the cytoplasm. The catalysed reaction is 2 D-alanine + ATP = D-alanyl-D-alanine + ADP + phosphate + H(+). It functions in the pathway cell wall biogenesis; peptidoglycan biosynthesis. In terms of biological role, cell wall formation. The polypeptide is D-alanine--D-alanine ligase (Thermus thermophilus (strain ATCC BAA-163 / DSM 7039 / HB27)).